We begin with the raw amino-acid sequence, 238 residues long: Sugar fermentation stimulation protein homolog (238 aa).

Belongs to the SfsA family.

This chain is Sugar fermentation stimulation protein homolog, found in Alteromonas mediterranea (strain DSM 17117 / CIP 110805 / LMG 28347 / Deep ecotype).